A 638-amino-acid chain; its full sequence is 1-deoxy-D-xylulose-5-phosphate synthase (638 aa).

Thiamine diphosphate-binding positions include histidine 77 and 118 to 120 (AHA). Aspartate 149 is a binding site for Mg(2+). Thiamine diphosphate contacts are provided by residues 150-151 (GS), asparagine 178, tyrosine 287, and glutamate 369. Residue asparagine 178 participates in Mg(2+) binding.

This sequence belongs to the transketolase family. DXPS subfamily. As to quaternary structure, homodimer. The cofactor is Mg(2+). Requires thiamine diphosphate as cofactor.

The catalysed reaction is D-glyceraldehyde 3-phosphate + pyruvate + H(+) = 1-deoxy-D-xylulose 5-phosphate + CO2. The protein operates within metabolic intermediate biosynthesis; 1-deoxy-D-xylulose 5-phosphate biosynthesis; 1-deoxy-D-xylulose 5-phosphate from D-glyceraldehyde 3-phosphate and pyruvate: step 1/1. Functionally, catalyzes the acyloin condensation reaction between C atoms 2 and 3 of pyruvate and glyceraldehyde 3-phosphate to yield 1-deoxy-D-xylulose-5-phosphate (DXP). This chain is 1-deoxy-D-xylulose-5-phosphate synthase, found in Phenylobacterium zucineum (strain HLK1).